The primary structure comprises 149 residues: UPF0179 protein Mbar_A0292 (149 aa).

Belongs to the UPF0179 family.

The chain is UPF0179 protein Mbar_A0292 from Methanosarcina barkeri (strain Fusaro / DSM 804).